Consider the following 95-residue polypeptide: Aspartyl/glutamyl-tRNA(Asn/Gln) amidotransferase subunit C (95 aa).

It belongs to the GatC family. Heterotrimer of A, B and C subunits.

It catalyses the reaction L-glutamyl-tRNA(Gln) + L-glutamine + ATP + H2O = L-glutaminyl-tRNA(Gln) + L-glutamate + ADP + phosphate + H(+). It carries out the reaction L-aspartyl-tRNA(Asn) + L-glutamine + ATP + H2O = L-asparaginyl-tRNA(Asn) + L-glutamate + ADP + phosphate + 2 H(+). Its function is as follows. Allows the formation of correctly charged Asn-tRNA(Asn) or Gln-tRNA(Gln) through the transamidation of misacylated Asp-tRNA(Asn) or Glu-tRNA(Gln) in organisms which lack either or both of asparaginyl-tRNA or glutaminyl-tRNA synthetases. The reaction takes place in the presence of glutamine and ATP through an activated phospho-Asp-tRNA(Asn) or phospho-Glu-tRNA(Gln). The chain is Aspartyl/glutamyl-tRNA(Asn/Gln) amidotransferase subunit C from Nitrosococcus oceani (strain ATCC 19707 / BCRC 17464 / JCM 30415 / NCIMB 11848 / C-107).